Reading from the N-terminus, the 336-residue chain is Glyceraldehyde-3-phosphate dehydrogenase 1 (336 aa).

NAD(+)-binding positions include Arg12–Ile13, Asp34, and Ser120. Residues Ser150–Thr152, Thr181, Arg198, Thr211–Gly212, and Arg234 each bind D-glyceraldehyde 3-phosphate. Cys151 functions as the Nucleophile in the catalytic mechanism. Residue Asn316 participates in NAD(+) binding.

The protein belongs to the glyceraldehyde-3-phosphate dehydrogenase family. Homotetramer.

The protein resides in the cytoplasm. The catalysed reaction is D-glyceraldehyde 3-phosphate + phosphate + NAD(+) = (2R)-3-phospho-glyceroyl phosphate + NADH + H(+). It participates in carbohydrate degradation; glycolysis; pyruvate from D-glyceraldehyde 3-phosphate: step 1/5. In terms of biological role, catalyzes the oxidative phosphorylation of glyceraldehyde 3-phosphate (G3P) to 1,3-bisphosphoglycerate (BPG) using the cofactor NAD. The first reaction step involves the formation of a hemiacetal intermediate between G3P and a cysteine residue, and this hemiacetal intermediate is then oxidized to a thioester, with concomitant reduction of NAD to NADH. The reduced NADH is then exchanged with the second NAD, and the thioester is attacked by a nucleophilic inorganic phosphate to produce BPG. The sequence is that of Glyceraldehyde-3-phosphate dehydrogenase 1 (gapA1) from Staphylococcus epidermidis (strain ATCC 35984 / DSM 28319 / BCRC 17069 / CCUG 31568 / BM 3577 / RP62A).